A 410-amino-acid chain; its full sequence is Putative transporter AmpG 1 (410 aa).

A run of 12 helical transmembrane segments spans residues 5–25, 40–60, 76–96, 98–118, 141–161, 169–189, 217–237, 265–285, 290–310, 320–340, 356–378, and 383–402; these read LSIIWLFGLISGFNIMITGNT, IGLLSLITLPYSINFLFAPIF, LSWICLTSIALVFFVYILSFL, PFDNLLLFASISLIISFFSSM, GIYIFGYRFGMLLANSGAIYL, EIYKIFAILIFIYLILLIVGV, ILKPIGSISFIILILIFLILY, VGKFWGVMGAIVGGLLGGFIM, ILDSILLFGIIHALAHILFII, LLFITIGAESITGGMTMTAYI, YSFFSSMMGISRSIFPIISGYIV, and WQNFFLFTTIITIPSLLVLL.

The protein belongs to the major facilitator superfamily.

It localises to the cell inner membrane. This Rickettsia bellii (strain RML369-C) protein is Putative transporter AmpG 1 (ampG1).